The sequence spans 718 residues: Quinolinate synthase, chloroplastic (718 aa).

Residues 1 to 22 are compositionally biased toward low complexity; that stretch reads MALALSVAPTSSSLSSLLSRTP. Residues 1–29 form a disordered region; sequence MALALSVAPTSSSLSSLLSRTPNPSPNFR. A chloroplast-targeting transit peptide spans 1 to 70; sequence MALALSVAPT…VNASPFSISA (70 aa). Residue Cys-132 is the Cysteine persulfide intermediate of the active site. Residues His-280 and Ser-306 each contribute to the iminosuccinate site. Cys-360 lines the [4Fe-4S] cluster pocket. Residues 389-391 and Ser-411 each bind iminosuccinate; that span reads YIN. [4Fe-4S] cluster is bound at residue Cys-484. Residues 510–512 and Thr-535 contribute to the iminosuccinate site; that span reads HLE. Residue Cys-640 coordinates [4Fe-4S] cluster.

Belongs to the quinolinate synthase family. Type 1 subfamily. Homodimer. Interacts in vitro with NFS2, CpNIFS3 and AO. Part of a Cys defulfurase complex. Requires [4Fe-4S] cluster as cofactor. As to expression, expressed in roots, leaves, stems and flowers.

The protein resides in the plastid. The protein localises to the chloroplast. It catalyses the reaction iminosuccinate + dihydroxyacetone phosphate = quinolinate + phosphate + 2 H2O + H(+). The protein operates within cofactor biosynthesis; NAD(+) biosynthesis; quinolinate from iminoaspartate: step 1/1. Functionally, catalyzes the condensation of iminoaspartate with dihydroxyacetone phosphate to form quinolinate. Can complement nadA-deficient E.coli mutant. Essential for the de novo synthesis of NAD. Also participates in cysteine desulfurization mediated by NFS2. Can activate the cysteine desulfurase activity of NFS2 in vitro. In Arabidopsis thaliana (Mouse-ear cress), this protein is Quinolinate synthase, chloroplastic.